We begin with the raw amino-acid sequence, 666 residues long: Probable potassium transport system protein Kup (666 aa).

A run of 12 helical transmembrane segments spans residues 16–36 (GFII…LYTM), 58–78 (ISLI…LIAL), 100–120 (PWLI…GALT), 141–161 (IYQN…VLFG), 165–185 (FGTG…FSFL), 221–241 (IFIL…YSDL), 253–273 (WPFV…WILA), 294–314 (VYLV…LISG), 343–363 (LYIP…VLAF), 373–393 (YGLA…YYLI), 399–419 (PILA…FFLA), and 424–444 (FMHG…VMFI).

Belongs to the HAK/KUP transporter (TC 2.A.72) family.

The protein resides in the cell membrane. The enzyme catalyses K(+)(in) + H(+)(in) = K(+)(out) + H(+)(out). Functionally, transport of potassium into the cell. Likely operates as a K(+):H(+) symporter. The sequence is that of Probable potassium transport system protein Kup from Streptococcus pyogenes serotype M49 (strain NZ131).